The chain runs to 325 residues: Ribonucleoside-diphosphate reductase small chain (325 aa).

Positions 76, 107, and 110 each coordinate Fe cation. Residue tyrosine 114 is part of the active site. Residues glutamate 170, glutamate 204, and histidine 207 each contribute to the Fe cation site.

Belongs to the ribonucleoside diphosphate reductase small chain family. As to quaternary structure, heterodimer of a large and a small subunit. Fe cation is required as a cofactor.

The catalysed reaction is a 2'-deoxyribonucleoside 5'-diphosphate + [thioredoxin]-disulfide + H2O = a ribonucleoside 5'-diphosphate + [thioredoxin]-dithiol. Its function is as follows. Provides the precursors necessary for DNA synthesis. Catalyzes the biosynthesis of deoxyribonucleotides from the corresponding ribonucleotides. This is Ribonucleoside-diphosphate reductase small chain from Encephalitozoon cuniculi (strain GB-M1) (Microsporidian parasite).